Here is a 453-residue protein sequence, read N- to C-terminus: Bifunctional protein GlmU (453 aa).

A pyrophosphorylase region spans residues 1–226 (MKFSAVILAA…PIEVEGVNDR (226 aa)). UDP-N-acetyl-alpha-D-glucosamine is bound by residues 8–11 (LAAG), lysine 22, glutamine 73, 78–79 (GT), 100–102 (YGD), glycine 137, glutamate 151, asparagine 166, and asparagine 224. Position 102 (aspartate 102) interacts with Mg(2+). Residue asparagine 224 participates in Mg(2+) binding. Residues 227–247 (AQLARLERAFQAAQAKKLLEQ) form a linker region. The interval 248–453 (GVMLRDPARF…TGWQRPVKKK (206 aa)) is N-acetyltransferase. Residues arginine 330 and lysine 348 each coordinate UDP-N-acetyl-alpha-D-glucosamine. The Proton acceptor role is filled by histidine 360. UDP-N-acetyl-alpha-D-glucosamine contacts are provided by tyrosine 363 and asparagine 374. Residues alanine 377, 383–384 (NY), serine 402, alanine 420, and arginine 437 contribute to the acetyl-CoA site.

It in the N-terminal section; belongs to the N-acetylglucosamine-1-phosphate uridyltransferase family. In the C-terminal section; belongs to the transferase hexapeptide repeat family. As to quaternary structure, homotrimer. Mg(2+) serves as cofactor.

It localises to the cytoplasm. It carries out the reaction alpha-D-glucosamine 1-phosphate + acetyl-CoA = N-acetyl-alpha-D-glucosamine 1-phosphate + CoA + H(+). It catalyses the reaction N-acetyl-alpha-D-glucosamine 1-phosphate + UTP + H(+) = UDP-N-acetyl-alpha-D-glucosamine + diphosphate. It functions in the pathway nucleotide-sugar biosynthesis; UDP-N-acetyl-alpha-D-glucosamine biosynthesis; N-acetyl-alpha-D-glucosamine 1-phosphate from alpha-D-glucosamine 6-phosphate (route II): step 2/2. The protein operates within nucleotide-sugar biosynthesis; UDP-N-acetyl-alpha-D-glucosamine biosynthesis; UDP-N-acetyl-alpha-D-glucosamine from N-acetyl-alpha-D-glucosamine 1-phosphate: step 1/1. It participates in bacterial outer membrane biogenesis; LPS lipid A biosynthesis. Its function is as follows. Catalyzes the last two sequential reactions in the de novo biosynthetic pathway for UDP-N-acetylglucosamine (UDP-GlcNAc). The C-terminal domain catalyzes the transfer of acetyl group from acetyl coenzyme A to glucosamine-1-phosphate (GlcN-1-P) to produce N-acetylglucosamine-1-phosphate (GlcNAc-1-P), which is converted into UDP-GlcNAc by the transfer of uridine 5-monophosphate (from uridine 5-triphosphate), a reaction catalyzed by the N-terminal domain. This Vibrio vulnificus (strain CMCP6) protein is Bifunctional protein GlmU.